We begin with the raw amino-acid sequence, 200 residues long: 3-isopropylmalate dehydratase small subunit (200 aa).

It belongs to the LeuD family. LeuD type 1 subfamily. As to quaternary structure, heterodimer of LeuC and LeuD.

The enzyme catalyses (2R,3S)-3-isopropylmalate = (2S)-2-isopropylmalate. The protein operates within amino-acid biosynthesis; L-leucine biosynthesis; L-leucine from 3-methyl-2-oxobutanoate: step 2/4. Its function is as follows. Catalyzes the isomerization between 2-isopropylmalate and 3-isopropylmalate, via the formation of 2-isopropylmaleate. This is 3-isopropylmalate dehydratase small subunit from Histophilus somni (strain 129Pt) (Haemophilus somnus).